Consider the following 78-residue polypeptide: Large ribosomal subunit protein bL28 (78 aa).

It belongs to the bacterial ribosomal protein bL28 family.

This is Large ribosomal subunit protein bL28 from Prochlorococcus marinus (strain AS9601).